The chain runs to 277 residues: Pristinamycin IIA synthase subunit B (277 aa).

As to quaternary structure, heterodimer of two subunits, SnaA and SnaB. It depends on FMN as a cofactor.

Functionally, catalyzes the oxidation of the proline residue of pristinamycin IIB (PIIB) to pristinamycin IIA (PIIA). The polypeptide is Pristinamycin IIA synthase subunit B (snaB) (Streptomyces pristinaespiralis).